The sequence spans 487 residues: Solute carrier family 22 member 15-like (487 aa).

Residues 23 to 43 traverse the membrane as a helical segment; sequence FLTLLQIYVACQSMLIVLVGA. Asparagine 70 is a glycosylation site (N-linked (GlcNAc...) asparagine). Transmembrane regions (helical) follow at residues 90 to 110, 117 to 137, 141 to 161, 178 to 198, 203 to 223, 286 to 306, 315 to 335, 345 to 365, 374 to 394, 408 to 428, and 435 to 455; these read LASS…GPLS, PVYL…ALAP, VFAV…LVSF, SLTN…GFYI, TLAF…FVLP, ILLM…TLNA, LNVA…LYFI, ATAG…FVPE, TVLA…VYIY, LGVC…IPAM, and MPFV…LLLP.

The protein belongs to the major facilitator (TC 2.A.1) superfamily. Organic cation transporter (TC 2.A.1.19) family.

It is found in the membrane. In terms of biological role, probably transports organic cations. The chain is Solute carrier family 22 member 15-like (slc22a15b) from Xenopus laevis (African clawed frog).